Reading from the N-terminus, the 151-residue chain is Calmodulin-like protein 9 (151 aa).

4 consecutive EF-hand domains span residues 8–43 (EQIQEFYEAFCLIDKDSDGFITKEKLTKVMKSMGKN), 44–79 (PKAEQLQQMMSDVDIFGNGGITFDDFLYIMAQNTSQ), 81–116 (SASDELIEVFRVFDRDGDGLISQLELGEGMKDMGMK), and 117–151 (ITAEEAEHMVREADLDGDGFLSFHEFSKMMIAASY). Ca(2+)-binding residues include aspartate 94, aspartate 96, aspartate 98, glutamate 105, aspartate 130, aspartate 132, aspartate 134, and glutamate 141.

Belongs to the calmodulin family. Interacts with IQD1. Interacts with ILK1. Binds to ABCG36. As to expression, expressed in leaves, flowers and siliques.

In terms of biological role, potential calcium sensor. This Arabidopsis thaliana (Mouse-ear cress) protein is Calmodulin-like protein 9.